A 650-amino-acid polypeptide reads, in one-letter code: Putative polypeptide N-acetylgalactosaminyltransferase 9 (650 aa).

Topologically, residues 1–11 (MAFIWRRRSTT) are cytoplasmic. A helical; Signal-anchor for type II membrane protein membrane pass occupies residues 12 to 31 (IVKLVAFALAIWFCIAFLVY). Residues 32–650 (TDDTRRRAAQ…TLENYDSSKL (619 aa)) are Lumenal-facing. The segment at 84–154 (NVIGGGGQKQ…NPGELGKPVR (71 aa)) is disordered. The span at 107-136 (HKADLQAERMRKKAAEQPKKKPQEDSKKVI) shows a compositional bias: basic and acidic residues. Cystine bridges form between C198-C432, C423-C499, C535-C554, C577-C590, and C616-C631. Residues 208-317 (LPKTDVIICF…EGWLEPLLDR (110 aa)) are catalytic subdomain A. Positions 216, 249, and 278 each coordinate substrate. D301 serves as a coordination point for Mn(2+). Residues S302 and H303 each contribute to the substrate site. Residue H303 participates in Mn(2+) binding. N-linked (GlcNAc...) asparagine glycans are attached at residues N321 and N373. The tract at residues 378-440 (PVYSPTMAGG…PCSHVGHIFR (63 aa)) is catalytic subdomain B. Mn(2+) is bound at residue H437. Residues R440 and Y445 each contribute to the substrate site. One can recognise a Ricin B-type lectin domain in the interval 521-643 (AHGEIRNLGY…SLSRQQWTLE (123 aa)).

Belongs to the glycosyltransferase 2 family. GalNAc-T subfamily. As to quaternary structure, isoform A forms homotetramer. Isoform B forms homodimer. Requires Mn(2+) as cofactor.

It is found in the golgi apparatus membrane. It catalyses the reaction L-seryl-[protein] + UDP-N-acetyl-alpha-D-galactosamine = a 3-O-[N-acetyl-alpha-D-galactosaminyl]-L-seryl-[protein] + UDP + H(+). The enzyme catalyses L-threonyl-[protein] + UDP-N-acetyl-alpha-D-galactosamine = a 3-O-[N-acetyl-alpha-D-galactosaminyl]-L-threonyl-[protein] + UDP + H(+). It functions in the pathway protein modification; protein glycosylation. In terms of biological role, catalyzes the initial reaction in O-linked oligosaccharide biosynthesis, the transfer of an N-acetyl-D-galactosamine residue to a serine or threonine residue on the protein receptor. It can both act as a peptide transferase that transfers GalNAc onto unmodified peptide substrates, and as a glycopeptide transferase that requires the prior addition of a GalNAc on a peptide before adding additional GalNAc moieties. N-acetylgalactosaminyltransferase which preferentially O-glycosylates negatively charge substrates. O-glycosylates mucin-like protein Sgs3 in the salivary gland but to a lesser extent than isoform B. By regulating the O-glycosylation of secretory cargo proteins plays a role in the morphology and maturation of salivary gland secretory granules. Functionally, N-acetylgalactosaminyltransferase which preferentially O-glycosylates positively charge substrates. O-glycosylates mucin-like protein Sgs3 in the salivary gland. By regulating the O-glycosylation of secretory cargo proteins, plays a role in the morphology and maturation of salivary gland secretory granules. The chain is Putative polypeptide N-acetylgalactosaminyltransferase 9 from Drosophila melanogaster (Fruit fly).